A 142-amino-acid chain; its full sequence is Large ribosomal subunit protein uL11 (142 aa).

Belongs to the universal ribosomal protein uL11 family. Part of the ribosomal stalk of the 50S ribosomal subunit. Interacts with L10 and the large rRNA to form the base of the stalk. L10 forms an elongated spine to which L12 dimers bind in a sequential fashion forming a multimeric L10(L12)X complex. In terms of processing, one or more lysine residues are methylated.

In terms of biological role, forms part of the ribosomal stalk which helps the ribosome interact with GTP-bound translation factors. In Enterobacter sp. (strain 638), this protein is Large ribosomal subunit protein uL11.